The following is a 367-amino-acid chain: Glutamate 5-kinase (367 aa).

Lysine 10 provides a ligand contact to ATP. Aspartate 137 and asparagine 149 together coordinate substrate. ATP is bound by residues 169–170 (TD) and 211–217 (TGGMATK). Residues 275-353 (AGEITVDDGA…QQISEILGYE (79 aa)) enclose the PUA domain.

This sequence belongs to the glutamate 5-kinase family.

It localises to the cytoplasm. The catalysed reaction is L-glutamate + ATP = L-glutamyl 5-phosphate + ADP. The protein operates within amino-acid biosynthesis; L-proline biosynthesis; L-glutamate 5-semialdehyde from L-glutamate: step 1/2. Its function is as follows. Catalyzes the transfer of a phosphate group to glutamate to form L-glutamate 5-phosphate. This is Glutamate 5-kinase from Yersinia pestis bv. Antiqua (strain Antiqua).